Here is a 206-residue protein sequence, read N- to C-terminus: LexA repressor (206 aa).

The H-T-H motif DNA-binding region spans 28 to 48 (RAEIATRLGFKSANAAEEHLK). Active-site for autocatalytic cleavage activity residues include Ser-123 and Lys-160.

Belongs to the peptidase S24 family. Homodimer.

It carries out the reaction Hydrolysis of Ala-|-Gly bond in repressor LexA.. Represses a number of genes involved in the response to DNA damage (SOS response), including recA and lexA. In the presence of single-stranded DNA, RecA interacts with LexA causing an autocatalytic cleavage which disrupts the DNA-binding part of LexA, leading to derepression of the SOS regulon and eventually DNA repair. This Shewanella sp. (strain MR-4) protein is LexA repressor.